The primary structure comprises 88 residues: UPF0297 protein BPUM_2379 (88 aa).

Belongs to the UPF0297 family.

This chain is UPF0297 protein BPUM_2379, found in Bacillus pumilus (strain SAFR-032).